A 121-amino-acid chain; its full sequence is Apoptin (121 aa).

Disordered regions lie at residues 1-28 (MNAL…LETP) and 57-121 (LRSA…CIRL). Positions 58–70 (RSATADNSESTGF) are enriched in polar residues. Over residues 88 to 102 (RSCDPSEYRVSELKE) the composition is skewed to basic and acidic residues.

This sequence belongs to the gyrovirus apoptin family.

It localises to the host nucleus. In terms of biological role, may act as transcriptional regulator. Induces apoptosis in infected cells. Element of infectious replication cycle. This Gallus gallus (Chicken) protein is Apoptin (VP3).